The primary structure comprises 274 residues: 2,3,4,5-tetrahydropyridine-2,6-dicarboxylate N-succinyltransferase (274 aa).

2 residues coordinate substrate: arginine 106 and aspartate 143.

This sequence belongs to the transferase hexapeptide repeat family. In terms of assembly, homotrimer.

The protein resides in the cytoplasm. The enzyme catalyses (S)-2,3,4,5-tetrahydrodipicolinate + succinyl-CoA + H2O = (S)-2-succinylamino-6-oxoheptanedioate + CoA. The protein operates within amino-acid biosynthesis; L-lysine biosynthesis via DAP pathway; LL-2,6-diaminopimelate from (S)-tetrahydrodipicolinate (succinylase route): step 1/3. The sequence is that of 2,3,4,5-tetrahydropyridine-2,6-dicarboxylate N-succinyltransferase from Rickettsia rickettsii (strain Sheila Smith).